Here is a 291-residue protein sequence, read N- to C-terminus: 33 kDa chaperonin (291 aa).

2 disulfide bridges follow: cysteine 229/cysteine 231 and cysteine 262/cysteine 265.

The protein belongs to the HSP33 family. In terms of processing, under oxidizing conditions two disulfide bonds are formed involving the reactive cysteines. Under reducing conditions zinc is bound to the reactive cysteines and the protein is inactive.

It localises to the cytoplasm. Its function is as follows. Redox regulated molecular chaperone. Protects both thermally unfolding and oxidatively damaged proteins from irreversible aggregation. Plays an important role in the bacterial defense system toward oxidative stress. The protein is 33 kDa chaperonin of Vibrio cholerae serotype O1 (strain ATCC 39315 / El Tor Inaba N16961).